A 270-amino-acid polypeptide reads, in one-letter code: Checkpoint signal transducer rad24 (270 aa).

A phosphoserine mark is found at Ser34 and Ser66. The interval 242-270 (AAAGGNTEGAQENAPSNAPEGEAEPKADA) is disordered.

This sequence belongs to the 14-3-3 family. In terms of assembly, homodimer. Binds preferentially to mei2 phosphorylated by ran1/pat1. Binds preferentially to cdc25 phosphorylated by srk1 during G2; the interaction is increased during osmotic stress. Interacts with byr2. Interacts with rad25.

Its subcellular location is the cytoplasm. In terms of biological role, acts in cell cycle and stress checkpoint signaling by sequestering signal transducers regulated by the checkpoints. Required for the DNA damage checkpoint that ensures that DNA damage is repaired before mitosis is attempted. During environmental stress, sequesters srk1-phosphorylated cdc25 in the cytoplasm to delay the G2/M transition. Sequesters byr2 in the cytoplasm to prevent its translocation to the plasma membrane. Sequesters ran1/pat1-phosphorylated mei2 from its non-coding RNA activators (including meiRNA), to prevent meiotic induction in vegetative cells and to regulate meiosis I. The protein is Checkpoint signal transducer rad24 of Schizosaccharomyces pombe (strain 972 / ATCC 24843) (Fission yeast).